Consider the following 334-residue polypeptide: Nucleoid-associated protein YPK_2796 (334 aa).

This sequence belongs to the YejK family.

Its subcellular location is the cytoplasm. The protein resides in the nucleoid. This is Nucleoid-associated protein YPK_2796 from Yersinia pseudotuberculosis serotype O:3 (strain YPIII).